The chain runs to 222 residues: Ras-related protein RABA4d (222 aa).

22 to 29 contributes to the GTP binding site; the sequence is GDSAVGKT. Residues 44 to 52 carry the Effector region motif; sequence SKATIGVEF. Residues 70–74, 128–131, and 158–159 each bind GTP; these read DTAGQ, NKCD, and SA. 2 S-geranylgeranyl cysteine lipidation sites follow: cysteine 218 and cysteine 219.

It belongs to the small GTPase superfamily. Rab family. In terms of assembly, interacts with PI4KB1. In terms of tissue distribution, specifically expressed in pollen and localized to the tips of growing pollen tubes.

It is found in the cytoplasmic vesicle membrane. In terms of biological role, intracellular vesicle trafficking and protein transport. Plays an important role in the regulation of pollen tube tip growth. This is Ras-related protein RABA4d (RABA4D) from Arabidopsis thaliana (Mouse-ear cress).